The chain runs to 959 residues: MCEPDDNSARNGVTTQPSRSRELLMDVDDLDLDGSWPLDQIPYLSSSNRMISPIFVSSSSEQPCSPLWAFSDGGGNGFHHATSGGDDEKISSVSGVPSFRLAEYPLFLPYSSPSAAENTTEKHNSFQFPSPLMSLVPPENTDNYCVIKERMTQALRYFKESTEQHVLAQVWAPVRKNGRDLLTTLGQPFVLNPNGNGLNQYRMISLTYMFSVDSESDVELGLPGRVFRQKLPEWTPNVQYYSSKEFSRLDHALHYNVRGTLALPVFNPSGQSCIGVVELIMTSEKIHYAPEVDKVCKALEAVNLKSSEILDHQTTQICNESRQNALAEILEVLTVVCETHNLPLAQTWVPCQHGSVLANGGGLKKNCTSFDGSCMGQICMSTTDMACYVVDAHVWGFRDACLEHHLQKGQGVAGRAFLNGGSCFCRDITKFCKTQYPLVHYALMFKLTTCFAISLQSSYTGDDSYILEFFLPSSITDDQEQDLLLGSILVTMKEHFQSLRVASGVDFGEDDDKLSFEIIQALPDKKVHSKIESIRVPFSGFKSNATETMLIPQPVVQSSDPVNEKINVATVNGVVKEKKKTEKKRGKTEKTISLDVLQQYFTGSLKDAAKSLGVCPTTMKRICRQHGISRWPSRKIKKVNRSITKLKRVIESVQGTDGGLDLTSMAVSSIPWTHGQTSAQPLNSPNGSKPPELPNTNNSPNHWSSDHSPNEPNGSPELPPSNGHKRSRTVDESAGTPTSHGSCDGNQLDEPKVPNQDPLFTVGGSPGLLFPPYSRDHDVSAASFAMPNRLLGSIDHFRGMLIEDAGSSKDLRNLCPTAAFDDKFQDTNWMNNDNNSNNNLYAPPKEEAIANVACEPSGSEMRTVTIKASYKDDIIRFRISSGSGIMELKDEVAKRLKVDAGTFDIKYLDDDNEWVLIACDADLQECLEIPRSSRTKIVRLLVHDVTTNLGSSCESTGEL.

The segment at 1–22 (MCEPDDNSARNGVTTQPSRSRE) is disordered. Over residues 9–18 (ARNGVTTQPS) the composition is skewed to polar residues. An RWP-RK domain is found at 578–659 (KKKTEKKRGK…IESVQGTDGG (82 aa)). The stretch at 633–654 (SRKIKKVNRSITKLKRVIESVQ) forms a coiled coil. Composition is skewed to polar residues over residues 673–687 (THGQ…SPNG), 694–703 (PNTNNSPNHW), and 735–745 (GTPTSHGSCDG). The tract at residues 673–760 (THGQTSAQPL…PKVPNQDPLF (88 aa)) is disordered. In terms of domain architecture, PB1 spans 863–945 (TVTIKASYKD…KIVRLLVHDV (83 aa)).

Interacts with NRG2. In terms of tissue distribution, expressed in roots, stems, leaves, flowers and siliques. Detected in root hairs, emerging secondary roots, vascular tissues, leaf parenchyma cells and stomata.

It is found in the nucleus. Transcription factor involved in regulation of nitrate assimilation and in transduction of the nitrate signal. The protein is Protein NLP7 (NLP7) of Arabidopsis thaliana (Mouse-ear cress).